The chain runs to 610 residues: Elongation factor 4 (610 aa).

The tr-type G domain occupies 13–195; it reads SHIRNFSIVA…AIVRKLPAPK (183 aa). GTP-binding positions include 25 to 30 and 142 to 145; these read DHGKST and NKID.

It belongs to the TRAFAC class translation factor GTPase superfamily. Classic translation factor GTPase family. LepA subfamily.

The protein localises to the cell inner membrane. The catalysed reaction is GTP + H2O = GDP + phosphate + H(+). In terms of biological role, required for accurate and efficient protein synthesis under certain stress conditions. May act as a fidelity factor of the translation reaction, by catalyzing a one-codon backward translocation of tRNAs on improperly translocated ribosomes. Back-translocation proceeds from a post-translocation (POST) complex to a pre-translocation (PRE) complex, thus giving elongation factor G a second chance to translocate the tRNAs correctly. Binds to ribosomes in a GTP-dependent manner. The protein is Elongation factor 4 of Rhizobium etli (strain CIAT 652).